Reading from the N-terminus, the 257-residue chain is Thiazole synthase (257 aa).

The active-site Schiff-base intermediate with DXP is K95. Residues G156, 182 to 183 (AG), and 204 to 205 (NT) each bind 1-deoxy-D-xylulose 5-phosphate.

Belongs to the ThiG family. Homotetramer. Forms heterodimers with either ThiH or ThiS.

The protein resides in the cytoplasm. It catalyses the reaction [ThiS sulfur-carrier protein]-C-terminal-Gly-aminoethanethioate + 2-iminoacetate + 1-deoxy-D-xylulose 5-phosphate = [ThiS sulfur-carrier protein]-C-terminal Gly-Gly + 2-[(2R,5Z)-2-carboxy-4-methylthiazol-5(2H)-ylidene]ethyl phosphate + 2 H2O + H(+). Its pathway is cofactor biosynthesis; thiamine diphosphate biosynthesis. Functionally, catalyzes the rearrangement of 1-deoxy-D-xylulose 5-phosphate (DXP) to produce the thiazole phosphate moiety of thiamine. Sulfur is provided by the thiocarboxylate moiety of the carrier protein ThiS. In vitro, sulfur can be provided by H(2)S. This is Thiazole synthase from Vibrio vulnificus (strain CMCP6).